The sequence spans 440 residues: T-box transcription factor T homolog 2 (440 aa).

The T-box DNA-binding region spans 44-215 (LWEKFKSLTN…HNPFAKAFLD (172 aa)). Disordered regions lie at residues 282 to 303 (APYP…DTAA) and 393 to 440 (TTAS…MPSM). Polar residues predominate over residues 409 to 440 (STDSGYGHSTTPPAPQTRITSNNWSPMTMPSM).

As to expression, mesoderm and notochord.

The protein resides in the nucleus. Involved in the transcriptional regulation of genes required for mesoderm formation and differentiation. The chain is T-box transcription factor T homolog 2 from Branchiostoma floridae (Florida lancelet).